A 425-amino-acid polypeptide reads, in one-letter code: Histidine--tRNA ligase (425 aa).

It belongs to the class-II aminoacyl-tRNA synthetase family. In terms of assembly, homodimer.

It is found in the cytoplasm. It catalyses the reaction tRNA(His) + L-histidine + ATP = L-histidyl-tRNA(His) + AMP + diphosphate + H(+). The sequence is that of Histidine--tRNA ligase from Streptococcus uberis (strain ATCC BAA-854 / 0140J).